The sequence spans 286 residues: General stress protein A (286 aa).

Residues 12–17 and 111–112 contribute to the UDP site; these read CADDNY and DC. Mn(2+) is bound by residues Asp111, Asp113, and His247. 247–253 is a binding site for UDP; that stretch reads HFCGGEK.

The protein belongs to the glycosyltransferase 8 family.

The chain is General stress protein A (gspA) from Bacillus subtilis (strain 168).